The chain runs to 344 residues: GDSL esterase/lipase At5g03590 (344 aa).

A signal peptide spans 1-19 (MHYLMKLFFSLSLFFGING). Catalysis depends on S41, which acts as the Nucleophile. N-linked (GlcNAc...) asparagine glycosylation is found at N126, N227, and N238. D318 is an active-site residue.

Belongs to the 'GDSL' lipolytic enzyme family.

It localises to the secreted. This Arabidopsis thaliana (Mouse-ear cress) protein is GDSL esterase/lipase At5g03590.